Here is a 544-residue protein sequence, read N- to C-terminus: (E,E)-germacrene B synthase (544 aa).

Residues Asp-296, Asp-300, and Glu-449 each contribute to the Mg(2+) site. Positions 296-300 (DDTFD) match the DDXXD motif motif.

Belongs to the terpene synthase family. The cofactor is Mg(2+). Requires Mn(2+) as cofactor.

The protein localises to the cytoplasm. The enzyme catalyses (2E,6E)-farnesyl diphosphate = (1E,4E)-germacrene B + diphosphate. The protein operates within secondary metabolite biosynthesis; terpenoid biosynthesis. Involved in the biosynthesis of germacrene B. This Solanum habrochaites (Wild tomato) protein is (E,E)-germacrene B synthase (SSTLH1).